The following is a 496-amino-acid chain: Lysine--tRNA ligase (496 aa).

2 residues coordinate Mg(2+): E403 and E410.

The protein belongs to the class-II aminoacyl-tRNA synthetase family. Homodimer. Mg(2+) serves as cofactor.

The protein resides in the cytoplasm. The catalysed reaction is tRNA(Lys) + L-lysine + ATP = L-lysyl-tRNA(Lys) + AMP + diphosphate. This Aster yellows witches'-broom phytoplasma (strain AYWB) protein is Lysine--tRNA ligase.